Consider the following 216-residue polypeptide: MTLSIRPDTVSAAQMVSSLSTQQTPTVTEAEMVQAVRTLLIGLGENPDREGLLDTPKRVVKALQFLTKGYNESLDELLNGAVFTEDANEMVLIRDIDIFSSCEHHILPIIGRAHVAYIPNGKVIGLSKIARVCEMYARRLQVQERLTLQIADALQGLLKPQGVAVVIEATHMCMVMRGVQKPGSWTVTSAMRGVFAEDARTREEFMNLVRHNANFH.

It belongs to the GTP cyclohydrolase I family. In terms of assembly, homomer.

It carries out the reaction GTP + H2O = 7,8-dihydroneopterin 3'-triphosphate + formate + H(+). It participates in cofactor biosynthesis; 7,8-dihydroneopterin triphosphate biosynthesis; 7,8-dihydroneopterin triphosphate from GTP: step 1/1. In Nostoc sp. (strain PCC 7120 / SAG 25.82 / UTEX 2576), this protein is GTP cyclohydrolase 1 2 (folE2).